The sequence spans 556 residues: Urocanate hydratase (556 aa).

NAD(+)-binding positions include 52-53, glutamine 130, 176-178, glutamate 196, arginine 201, 242-243, 263-267, 273-274, and tyrosine 322; these read GG, GMG, NA, QTSAH, and YL. Cysteine 410 is an active-site residue. Glycine 492 contributes to the NAD(+) binding site.

It belongs to the urocanase family. NAD(+) is required as a cofactor.

It is found in the cytoplasm. It catalyses the reaction 4-imidazolone-5-propanoate = trans-urocanate + H2O. Its pathway is amino-acid degradation; L-histidine degradation into L-glutamate; N-formimidoyl-L-glutamate from L-histidine: step 2/3. Catalyzes the conversion of urocanate to 4-imidazolone-5-propionate. This is Urocanate hydratase from Shewanella oneidensis (strain ATCC 700550 / JCM 31522 / CIP 106686 / LMG 19005 / NCIMB 14063 / MR-1).